A 732-amino-acid polypeptide reads, in one-letter code: Photosystem I P700 chlorophyll a apoprotein A2 (732 aa).

The next 8 helical transmembrane spans lie at 46–69, 133–156, 173–197, 271–289, 328–351, 367–393, 415–437, and 515–533; these read IFASHFGHLAIIFLWTSGNLFHVA, LYTGALGLLVLSAVFLLAGWLHIQ, LNHHLAGLFGVSSLAWTGHLVHVAI, MAHHHLAIAVIFIVAGHMY, LHFQLGLALASLSVVTSLVAQHMY, SALYTHHQYIAGLLIVGAFAHGAIFFI, AVISHLSWVSLFLGFHTLGLYVH, and FLVHHAIALGLHTTTLILV. Cys-557 and Cys-566 together coordinate [4Fe-4S] cluster. 2 helical membrane passes run 573–594 and 641–663; these read AFYLAMFWMLNTIGWVTFYWHW and LAVWSWMFLFAHLVWATGFMFLI. Positions 652, 660, and 668 each coordinate chlorophyll a. Residue Trp-669 participates in phylloquinone binding. Residues 705 to 725 traverse the membrane as a helical segment; it reads LVGLVHFTVGYILTYAAFVIA.

The protein belongs to the PsaA/PsaB family. In terms of assembly, the PsaA/B heterodimer binds the P700 chlorophyll special pair and subsequent electron acceptors. PSI consists of a core antenna complex that captures photons, and an electron transfer chain that converts photonic excitation into a charge separation. The eukaryotic PSI reaction center is composed of at least 11 subunits. P700 is a chlorophyll a/chlorophyll a' dimer, A0 is one or more chlorophyll a, A1 is one or both phylloquinones and FX is a shared 4Fe-4S iron-sulfur center. serves as cofactor.

The protein resides in the plastid. Its subcellular location is the chloroplast thylakoid membrane. The enzyme catalyses reduced [plastocyanin] + hnu + oxidized [2Fe-2S]-[ferredoxin] = oxidized [plastocyanin] + reduced [2Fe-2S]-[ferredoxin]. Its function is as follows. PsaA and PsaB bind P700, the primary electron donor of photosystem I (PSI), as well as the electron acceptors A0, A1 and FX. PSI is a plastocyanin/cytochrome c6-ferredoxin oxidoreductase, converting photonic excitation into a charge separation, which transfers an electron from the donor P700 chlorophyll pair to the spectroscopically characterized acceptors A0, A1, FX, FA and FB in turn. Oxidized P700 is reduced on the lumenal side of the thylakoid membrane by plastocyanin or cytochrome c6. The protein is Photosystem I P700 chlorophyll a apoprotein A2 of Cyanidioschyzon merolae (strain NIES-3377 / 10D) (Unicellular red alga).